A 91-amino-acid chain; its full sequence is Small ribosomal subunit protein uS19 (91 aa).

The protein belongs to the universal ribosomal protein uS19 family.

Protein S19 forms a complex with S13 that binds strongly to the 16S ribosomal RNA. This chain is Small ribosomal subunit protein uS19, found in Methylobacillus flagellatus (strain ATCC 51484 / DSM 6875 / VKM B-1610 / KT).